The primary structure comprises 368 residues: tRNA-specific 2-thiouridylase MnmA (368 aa).

ATP contacts are provided by residues 11–18 (GMSGGVDS) and Met37. The tract at residues 97-99 (NPD) is interaction with target base in tRNA. The active-site Nucleophile is Cys102. A disulfide bridge links Cys102 with Cys199. Position 127 (Gly127) interacts with ATP. Residues 149 to 151 (KDQ) form an interaction with tRNA region. The active-site Cysteine persulfide intermediate is the Cys199. An interaction with tRNA region spans residues 311 to 312 (RY).

The protein belongs to the MnmA/TRMU family. As to quaternary structure, interacts with TusE.

It is found in the cytoplasm. The enzyme catalyses S-sulfanyl-L-cysteinyl-[protein] + uridine(34) in tRNA + AH2 + ATP = 2-thiouridine(34) in tRNA + L-cysteinyl-[protein] + A + AMP + diphosphate + H(+). Functionally, catalyzes the 2-thiolation of uridine at the wobble position (U34) of tRNA(Lys), tRNA(Glu) and tRNA(Gln), leading to the formation of s(2)U34, the first step of tRNA-mnm(5)s(2)U34 synthesis. Sulfur is provided by IscS, via a sulfur-relay system. Binds ATP and its substrate tRNAs. The polypeptide is tRNA-specific 2-thiouridylase MnmA (Shigella flexneri serotype 5b (strain 8401)).